The following is a 426-amino-acid chain: Putative phosphate permease TC_0064 (426 aa).

11 helical membrane-spanning segments follow: residues 1 to 21 (MWWL…NIGA), 37 to 57 (LTLR…AVVL), 83 to 103 (VFGM…ASFF), 104 to 124 (GWPV…GIIL), 140 to 160 (VSWL…FSFI), 183 to 203 (AIII…ARVV), 207 to 227 (VAFR…IWGV), 260 to 280 (LVVE…MSFA), 309 to 329 (VLFI…ATWG), 365 to 385 (FGFP…VGLA), and 399 to 419 (IVLS…MFFL).

The protein belongs to the inorganic phosphate transporter (PiT) (TC 2.A.20) family.

It localises to the cell membrane. In terms of biological role, potential transporter for phosphate. This is Putative phosphate permease TC_0064 from Chlamydia muridarum (strain MoPn / Nigg).